The primary structure comprises 142 residues: SPbeta prophage-derived deoxyuridine 5'-triphosphate nucleotidohydrolase YosS (142 aa).

Residues Ser-62 and Asn-74 each coordinate dUMP. Asp-80 serves as the catalytic Proton acceptor. Residues Tyr-83 and Phe-91 each coordinate dUMP.

Belongs to the dUTPase family. In terms of assembly, homotrimer. Requires Mg(2+) as cofactor.

The catalysed reaction is dUTP + H2O = dUMP + diphosphate + H(+). Its pathway is pyrimidine metabolism; dUMP biosynthesis; dUMP from dCTP (dUTP route): step 2/2. Involved in nucleotide metabolism: produces dUMP, the immediate precursor of thymidine nucleotides and decreases the intracellular concentration of dUTP, so that uracil cannot be incorporated into DNA. The Ser-62 side chain changes its position upon ligand-binding to make contacts with the nucleotide phosphates. This chain is SPbeta prophage-derived deoxyuridine 5'-triphosphate nucleotidohydrolase YosS, found in Bacillus subtilis (strain 168).